The chain runs to 225 residues: NAD(P)H-quinone oxidoreductase subunit K, chloroplastic (225 aa).

Residues cysteine 43, cysteine 44, cysteine 108, and cysteine 139 each contribute to the [4Fe-4S] cluster site.

It belongs to the complex I 20 kDa subunit family. NDH is composed of at least 16 different subunits, 5 of which are encoded in the nucleus. It depends on [4Fe-4S] cluster as a cofactor.

It localises to the plastid. The protein resides in the chloroplast thylakoid membrane. The enzyme catalyses a plastoquinone + NADH + (n+1) H(+)(in) = a plastoquinol + NAD(+) + n H(+)(out). It catalyses the reaction a plastoquinone + NADPH + (n+1) H(+)(in) = a plastoquinol + NADP(+) + n H(+)(out). NDH shuttles electrons from NAD(P)H:plastoquinone, via FMN and iron-sulfur (Fe-S) centers, to quinones in the photosynthetic chain and possibly in a chloroplast respiratory chain. The immediate electron acceptor for the enzyme in this species is believed to be plastoquinone. Couples the redox reaction to proton translocation, and thus conserves the redox energy in a proton gradient. The polypeptide is NAD(P)H-quinone oxidoreductase subunit K, chloroplastic (Manihot esculenta (Cassava)).